Consider the following 276-residue polypeptide: 4-hydroxy-3-methylbut-2-enyl diphosphate reductase (276 aa).

Cys-12 lines the [4Fe-4S] cluster pocket. (2E)-4-hydroxy-3-methylbut-2-enyl diphosphate-binding residues include His-36 and His-70. Dimethylallyl diphosphate is bound by residues His-36 and His-70. Isopentenyl diphosphate is bound by residues His-36 and His-70. Cys-92 is a [4Fe-4S] cluster binding site. His-120 is a binding site for (2E)-4-hydroxy-3-methylbut-2-enyl diphosphate. His-120 is a binding site for dimethylallyl diphosphate. His-120 lines the isopentenyl diphosphate pocket. Glu-122 serves as the catalytic Proton donor. Thr-158 contacts (2E)-4-hydroxy-3-methylbut-2-enyl diphosphate. Residue Cys-186 participates in [4Fe-4S] cluster binding. Positions 214, 215, 216, and 258 each coordinate (2E)-4-hydroxy-3-methylbut-2-enyl diphosphate. Positions 214, 215, 216, and 258 each coordinate dimethylallyl diphosphate. Isopentenyl diphosphate contacts are provided by Ser-214, Ser-215, Asn-216, and Ser-258.

This sequence belongs to the IspH family. It depends on [4Fe-4S] cluster as a cofactor.

The enzyme catalyses isopentenyl diphosphate + 2 oxidized [2Fe-2S]-[ferredoxin] + H2O = (2E)-4-hydroxy-3-methylbut-2-enyl diphosphate + 2 reduced [2Fe-2S]-[ferredoxin] + 2 H(+). The catalysed reaction is dimethylallyl diphosphate + 2 oxidized [2Fe-2S]-[ferredoxin] + H2O = (2E)-4-hydroxy-3-methylbut-2-enyl diphosphate + 2 reduced [2Fe-2S]-[ferredoxin] + 2 H(+). It participates in isoprenoid biosynthesis; dimethylallyl diphosphate biosynthesis; dimethylallyl diphosphate from (2E)-4-hydroxy-3-methylbutenyl diphosphate: step 1/1. The protein operates within isoprenoid biosynthesis; isopentenyl diphosphate biosynthesis via DXP pathway; isopentenyl diphosphate from 1-deoxy-D-xylulose 5-phosphate: step 6/6. Its function is as follows. Catalyzes the conversion of 1-hydroxy-2-methyl-2-(E)-butenyl 4-diphosphate (HMBPP) into a mixture of isopentenyl diphosphate (IPP) and dimethylallyl diphosphate (DMAPP). Acts in the terminal step of the DOXP/MEP pathway for isoprenoid precursor biosynthesis. The chain is 4-hydroxy-3-methylbut-2-enyl diphosphate reductase from Wolinella succinogenes (strain ATCC 29543 / DSM 1740 / CCUG 13145 / JCM 31913 / LMG 7466 / NCTC 11488 / FDC 602W) (Vibrio succinogenes).